A 256-amino-acid polypeptide reads, in one-letter code: Probable elongation factor 1-delta (256 aa).

Phosphoserine is present on residues serine 37, serine 53, and serine 89. Positions 110–146 (NGVSKEPEVEAKKPEANDDDDDVDLFGSDSEEEDGEA) are disordered. Residues 114–125 (KEPEVEAKKPEA) show a composition bias toward basic and acidic residues. Over residues 126 to 144 (NDDDDDVDLFGSDSEEEDG) the composition is skewed to acidic residues. A phosphoserine mark is found at serine 137 and serine 139.

This sequence belongs to the EF-1-beta/EF-1-delta family. EF-1 is composed of 4 subunits: alpha, beta, delta, and gamma.

In terms of biological role, EF-1-beta and EF-1-delta stimulate the exchange of GDP bound to EF-1-alpha to GTP. The polypeptide is Probable elongation factor 1-delta (eEF1delta) (Drosophila melanogaster (Fruit fly)).